We begin with the raw amino-acid sequence, 278 residues long: MDIKAYFELIRLKNCLTASFGAFIGGLIASYFNLATVYDLILASIVVFLVCGFGNALNDIYDLKIDKINKPERPIPSKRLSLTDARVFSYLLVFVGLFISLFNMACFLMAVLNSIVLQQYASTYKKNKIIGNLIVAYLTGSVFIFGGIAVGNIDVTIMLFLCALFAMWSREIIKDYEDIEGDIQEKVISIPIKCGEKSVYIAAFLLVFAVFLSPLPYLFGFFGIYYMLSVVFCDLLFLIGIYNLVKNPSKKEAKKASRNIKIVTNLVLIAFLIGSLFK.

The next 8 membrane-spanning stretches (helical) occupy residues 12–32 (LKNC…ASYF), 34–54 (LATV…CGFG), 91–111 (LLVF…LMAV), 129–149 (IIGN…GGIA), 153–173 (IDVT…REII), 204–224 (FLLV…FFGI), 225–245 (YYML…YNLV), and 257–277 (SRNI…GSLF).

Belongs to the UbiA prenyltransferase family. DGGGP synthase subfamily. Mg(2+) serves as cofactor.

Its subcellular location is the cell membrane. The catalysed reaction is sn-3-O-(geranylgeranyl)glycerol 1-phosphate + (2E,6E,10E)-geranylgeranyl diphosphate = 2,3-bis-O-(geranylgeranyl)-sn-glycerol 1-phosphate + diphosphate. It participates in membrane lipid metabolism; glycerophospholipid metabolism. Functionally, prenyltransferase that catalyzes the transfer of the geranylgeranyl moiety of geranylgeranyl diphosphate (GGPP) to the C2 hydroxyl of (S)-3-O-geranylgeranylglyceryl phosphate (GGGP). This reaction is the second ether-bond-formation step in the biosynthesis of archaeal membrane lipids. This chain is Digeranylgeranylglyceryl phosphate synthase, found in Methanococcus maripaludis (strain C7 / ATCC BAA-1331).